A 605-amino-acid chain; its full sequence is Apoptosis-inducing factor 3 (605 aa).

A disordered region spans residues 22 to 45 (KERGKEELSASGKGSPRAYQGNGT). Positions 70–165 (AAVCHVKDLE…VKIEKEKVYV (96 aa)) constitute a Rieske domain. Positions 109, 111, 128, and 131 each coordinate [2Fe-2S] cluster. FAD is bound by residues 201 to 205 (GAGAA), Arg235, Lys240, Val270, Asp467, and Trp514.

The protein belongs to the FAD-dependent oxidoreductase family. In terms of tissue distribution, ubiquitous. Expressed in bone marrow, cerebral cortex, liver, ovary, thymus, thyroid gland and tongue (at protein level).

The protein resides in the mitochondrion. Its function is as follows. Induces apoptosis through a caspase dependent pathway. Reduces mitochondrial membrane potential. The protein is Apoptosis-inducing factor 3 (AIFM3) of Homo sapiens (Human).